Here is a 335-residue protein sequence, read N- to C-terminus: Adenine deaminase (335 aa).

His-14, His-16, and His-194 together coordinate Zn(2+). The active-site Proton donor is Glu-197. Asp-275 contributes to the Zn(2+) binding site. Asp-276 is a substrate binding site.

It belongs to the metallo-dependent hydrolases superfamily. Adenosine and AMP deaminases family. Adenine deaminase type 2 subfamily. Requires Zn(2+) as cofactor.

The enzyme catalyses adenine + H2O + H(+) = hypoxanthine + NH4(+). Catalyzes the hydrolytic deamination of adenine to hypoxanthine. Plays an important role in the purine salvage pathway and in nitrogen catabolism. This chain is Adenine deaminase, found in Chlorobium phaeobacteroides (strain BS1).